The sequence spans 306 residues: 1-aminocyclopropane-1-carboxylate oxidase (306 aa).

The region spanning P153–P253 is the Fe2OG dioxygenase domain. Fe cation-binding residues include H177, D179, and H234.

The protein belongs to the iron/ascorbate-dependent oxidoreductase family. The cofactor is Fe cation.

The enzyme catalyses 1-aminocyclopropane-1-carboxylate + L-ascorbate + O2 = ethene + L-dehydroascorbate + hydrogen cyanide + CO2 + 2 H2O. It functions in the pathway alkene biosynthesis; ethylene biosynthesis via S-adenosyl-L-methionine; ethylene from S-adenosyl-L-methionine: step 2/2. The protein is 1-aminocyclopropane-1-carboxylate oxidase (MAO1B) of Musa acuminata (Banana).